The primary structure comprises 313 residues: Methionyl-tRNA formyltransferase (313 aa).

S109 to P112 provides a ligand contact to (6S)-5,6,7,8-tetrahydrofolate.

This sequence belongs to the Fmt family.

It carries out the reaction L-methionyl-tRNA(fMet) + (6R)-10-formyltetrahydrofolate = N-formyl-L-methionyl-tRNA(fMet) + (6S)-5,6,7,8-tetrahydrofolate + H(+). Its function is as follows. Attaches a formyl group to the free amino group of methionyl-tRNA(fMet). The formyl group appears to play a dual role in the initiator identity of N-formylmethionyl-tRNA by promoting its recognition by IF2 and preventing the misappropriation of this tRNA by the elongation apparatus. The sequence is that of Methionyl-tRNA formyltransferase from Thermotoga sp. (strain RQ2).